Here is an 854-residue protein sequence, read N- to C-terminus: Putative Tricorn-like protease C-terminal subunit (854 aa).

The Charge relay system role is filled by His539. The segment at 554–646 is PDZ-like; the sequence is PIGGLGADYE…RVTVKLLKDE (93 aa). Gly709 serves as a coordination point for substrate. Residue Ser756 is the Nucleophile of the active site. Residue Glu814 is the Charge relay system of the active site.

Belongs to the peptidase S41B family.

It localises to the cytoplasm. Its function is as follows. Degrades oligopeptides in a sequential manner. This Sulfurisphaera tokodaii (strain DSM 16993 / JCM 10545 / NBRC 100140 / 7) (Sulfolobus tokodaii) protein is Putative Tricorn-like protease C-terminal subunit (triC).